The primary structure comprises 690 residues: Methionine--tRNA ligase (690 aa).

Residues 12–22 (PYANGPLHLGH) carry the 'HIGH' region motif. Zn(2+)-binding residues include Cys144, Cys147, Cys157, and Cys160. Residues 333–337 (QFSKS) carry the 'KMSKS' region motif. Lys336 provides a ligand contact to ATP. In terms of domain architecture, tRNA-binding spans 535–632 (KKINIDLMVG…VNADDGSRMK (98 aa)).

It belongs to the class-I aminoacyl-tRNA synthetase family. MetG type 1 subfamily. Homodimer. Requires Zn(2+) as cofactor.

Its subcellular location is the cytoplasm. The catalysed reaction is tRNA(Met) + L-methionine + ATP = L-methionyl-tRNA(Met) + AMP + diphosphate. In terms of biological role, is required not only for elongation of protein synthesis but also for the initiation of all mRNA translation through initiator tRNA(fMet) aminoacylation. This is Methionine--tRNA ligase from Picrophilus torridus (strain ATCC 700027 / DSM 9790 / JCM 10055 / NBRC 100828 / KAW 2/3).